The sequence spans 509 residues: Cytochrome P450 4A10 (509 aa).

2 consecutive transmembrane segments (helical) span residues 15–35 (LSGF…VKAV) and 121–141 (LLAP…WFQH). Glu-320 serves as a coordination point for heme. Ser-439 is modified (phosphoserine). Cys-456 serves as a coordination point for heme.

Belongs to the cytochrome P450 family. Requires heme as cofactor. As to expression, highly expressed in the kidneys of both genders.

The protein resides in the endoplasmic reticulum membrane. It is found in the microsome membrane. The enzyme catalyses an omega-methyl-long-chain fatty acid + reduced [NADPH--hemoprotein reductase] + O2 = an omega-hydroxy-long-chain fatty acid + oxidized [NADPH--hemoprotein reductase] + H2O + H(+). It catalyses the reaction dodecanoate + reduced [NADPH--hemoprotein reductase] + O2 = 12-hydroxydodecanoate + oxidized [NADPH--hemoprotein reductase] + H2O + H(+). It carries out the reaction dodecanoate + reduced [NADPH--hemoprotein reductase] + O2 = 11-hydroxydodecanoate + oxidized [NADPH--hemoprotein reductase] + H2O + H(+). The catalysed reaction is tetradecanoate + reduced [NADPH--hemoprotein reductase] + O2 = 14-hydroxytetradecanoate + oxidized [NADPH--hemoprotein reductase] + H2O + H(+). The enzyme catalyses hexadecanoate + reduced [NADPH--hemoprotein reductase] + O2 = 16-hydroxyhexadecanoate + oxidized [NADPH--hemoprotein reductase] + H2O + H(+). It catalyses the reaction (9Z)-octadecenoate + reduced [NADPH--hemoprotein reductase] + O2 = 18-hydroxy-(9Z)-octadecenoate + oxidized [NADPH--hemoprotein reductase] + H2O + H(+). It carries out the reaction (9Z,12Z)-octadecadienoate + reduced [NADPH--hemoprotein reductase] + O2 = 18-hydroxy-(9Z,12Z)-octadecadienoate + oxidized [NADPH--hemoprotein reductase] + H2O + H(+). The catalysed reaction is (9Z,12Z)-octadecadienoate + reduced [NADPH--hemoprotein reductase] + O2 = 17-hydroxy-(9Z,12Z)-octadecadienoate + oxidized [NADPH--hemoprotein reductase] + H2O + H(+). The enzyme catalyses (5Z,8Z,11Z,14Z)-eicosatetraenoate + reduced [NADPH--hemoprotein reductase] + O2 = 20-hydroxy-(5Z,8Z,11Z,14Z)-eicosatetraenoate + oxidized [NADPH--hemoprotein reductase] + H2O + H(+). It catalyses the reaction 8,9-epoxy-(5Z,11Z,14Z)-eicosatrienoate + reduced [NADPH--hemoprotein reductase] + O2 = 20-hydroxy-8,9-epoxy-(5Z,11Z,14Z)-eicosatrienoate + oxidized [NADPH--hemoprotein reductase] + H2O + H(+). Its function is as follows. A cytochrome P450 monooxygenase involved in the metabolism of fatty acids. Catalyzes predominantly the oxidation of the terminal carbon (omega-oxidation) of long-chain fatty acids. Acts as a major omega-hydroxylase for dodecanoic (lauric) acid in liver. In kidney, may play an important role in omega-hydroxylation of (5Z,8Z,11Z,14Z)-eicosatetraenoic acid (arachidonate) to 20-hydroxyeicosatetraenoic acid (20-HETE), a signaling molecule acting both as vasoconstrictive and natriuretic with overall effect on arterial blood pressure. Also participates in the formation of anti-inflammatory hydroxyepoxyeicosatrienoic acids (HEETs) in kidney by converting 8,9-epoxyeicosatrienoic acid (EET) to 20,8,9-HEET, an activator of PPARA. Displays substantially lower fatty acid omega-1 hydroxylase activity. Mechanistically, uses molecular oxygen inserting one oxygen atom into a substrate, and reducing the second into a water molecule, with two electrons provided by NADPH via cytochrome P450 reductase (CPR; NADPH-ferrihemoprotein reductase). This chain is Cytochrome P450 4A10, found in Mus musculus (Mouse).